A 118-amino-acid chain; its full sequence is Succinate dehydrogenase assembly factor 1, mitochondrial (118 aa).

An LYR motif 1; required for interaction with HSC20 motif is present at residues 14–16 (LYR). The LYR motif 2; not required for interaction with HSC20 signature appears at 53–55 (LYR). Residues 53–65 (LYRRGRRQLQLLR) form an interaction with SDHB region. The tract at residues 68-118 (HATAMGTFVRPRGPAEEPGDATAPGTRLDDGGAPKNSCEDTGARETRSDGR) is disordered. A compositionally biased stretch (basic and acidic residues) spans 94–118 (RLDDGGAPKNSCEDTGARETRSDGR).

This sequence belongs to the complex I LYR family. SDHAF1 subfamily. Interacts with SDHB within an SDHA-SDHB subcomplex. Also interacts with the iron-sulfur transfer complex formed by HSC20, HSPA9 and ISCU through direct binding to HSC20. Binding of SDHAF1 to SDHB precedes and is necessary for recruitment of the iron-sulfur transfer complex by SDHAF1.

It localises to the mitochondrion matrix. Plays an essential role in the assembly of succinate dehydrogenase (SDH), an enzyme complex (also referred to as respiratory complex II) that is a component of both the tricarboxylic acid (TCA) cycle and the mitochondrial electron transport chain, and which couples the oxidation of succinate to fumarate with the reduction of ubiquinone (coenzyme Q) to ubiquinol. Promotes maturation of the iron-sulfur protein subunit Sdhb of the SDH catalytic dimer, protecting it from the deleterious effects of oxidants. May act together with SDHAF3. Contributes to iron-sulfur cluster incorporation into SDHB by binding to SDHB and recruiting the iron-sulfur transfer complex formed by HSC20, HSPA9 and ISCU through direct binding to HSC20. In Mus musculus (Mouse), this protein is Succinate dehydrogenase assembly factor 1, mitochondrial.